The following is a 222-amino-acid chain: Exosome complex component Rrp4 (222 aa).

Residues 63–131 enclose the S1 motif domain; sequence GDLVIGRVTG…EINRVKLTLR (69 aa).

The protein belongs to the RRP4 family. In terms of assembly, component of the archaeal exosome complex. Forms a trimer of Rrp4 and/or Csl4 subunits. The trimer associates with a hexameric ring-like arrangement composed of 3 Rrp41-Rrp42 heterodimers.

The protein resides in the cytoplasm. Its function is as follows. Non-catalytic component of the exosome, which is a complex involved in RNA degradation. Increases the RNA binding and the efficiency of RNA degradation. Confers strong poly(A) specificity to the exosome. The sequence is that of Exosome complex component Rrp4 from Methanosphaera stadtmanae (strain ATCC 43021 / DSM 3091 / JCM 11832 / MCB-3).